We begin with the raw amino-acid sequence, 1209 residues long: Protein FAM83H (1209 aa).

Positions 1 to 286 (MARRSQSSSQ…LFAQSEPLVP (286 aa)) are DUF1669. The segment at 1-286 (MARRSQSSSQ…LFAQSEPLVP (286 aa)) is mediates interaction with CSNK1A1 and is required for FAM83H activity in keratin cytoskeleton organization. S512, S513, S515, S522, S639, and S660 each carry phosphoserine. Disordered regions lie at residues 512–545 (SSASREVRHGSDPAFGPSPRGLEPSGASRPNLGQ), 615–664 (RDLL…FRSR), and 735–760 (KGPARDPGGAGGAVTSSSHSKAVVSQ). T749 carries the post-translational modification Phosphothreonine. 4 positions are modified to phosphoserine: S752, S778, S806, and S871. Residues 829 to 1056 (AQGRSLSPQG…EERGSRVRLA (228 aa)) are disordered. T873 carries the phosphothreonine modification. 4 positions are modified to phosphoserine: S882, S893, S904, and S915. Residues 915–942 (SPTSGFPNRRGSPTTGLMEQKGSPTSTY) show a composition bias toward polar residues. T917 carries the phosphothreonine modification. S926 is subject to Phosphoserine. The residue at position 928 (T928) is a Phosphothreonine. 8 positions are modified to phosphoserine: S937, S948, S959, S970, S977, S1035, S1041, and S1057. At T1072 the chain carries Phosphothreonine. 2 disordered regions span residues 1076–1147 (LEQI…EERD) and 1174–1193 (EAGSSGAGDNLADEDTRDSK). A phosphoserine mark is found at S1080, S1098, and S1177.

This sequence belongs to the FAM83 family. Directly interacts (via DUF1669) with casein kinase isoforms CSNK1A1, CSNK1A1L, CSNK1D and CSNK1E. Interaction with CSNK1A1 recruits CSNK1A1 to keratin filaments. Interacts with KRT18 and probably other keratins. Expressed in tooth follicle, eye, liver and kidney.

It localises to the cytoplasm. It is found in the cytoskeleton. Its function is as follows. May play a major role in the structural organization and calcification of developing enamel. May play a role in keratin cytoskeleton disassembly by recruiting CSNK1A1 to keratin filaments. Thereby, it may regulate epithelial cell migration. This chain is Protein FAM83H, found in Mus musculus (Mouse).